A 220-amino-acid chain; its full sequence is RING-H2 finger protein ATL77 (220 aa).

A helical transmembrane segment spans residues 53–73; the sequence is LMLLSILLCGIICSLGLHYII. The segment at 130–172 adopts an RING-type; atypical zinc-finger fold; sequence CVICLSDFVAGEQLRVLPKCNHGFHLRCIDKWLTQHMTCPKCR.

This sequence belongs to the RING-type zinc finger family. ATL subfamily.

The protein localises to the membrane. The catalysed reaction is S-ubiquitinyl-[E2 ubiquitin-conjugating enzyme]-L-cysteine + [acceptor protein]-L-lysine = [E2 ubiquitin-conjugating enzyme]-L-cysteine + N(6)-ubiquitinyl-[acceptor protein]-L-lysine.. Its pathway is protein modification; protein ubiquitination. The protein is RING-H2 finger protein ATL77 (ATL77) of Arabidopsis thaliana (Mouse-ear cress).